The following is a 225-amino-acid chain: Small ribosomal subunit protein uS5 (225 aa).

The S5 DRBM domain occupies 57-120 (LEEQVLDVKL…AQAKLSLIKV (64 aa)).

Belongs to the universal ribosomal protein uS5 family. As to quaternary structure, part of the 30S ribosomal subunit. Contacts protein S4.

Functionally, with S4 and S12 plays an important role in translational accuracy. This Methanococcus vannielii (strain ATCC 35089 / DSM 1224 / JCM 13029 / OCM 148 / SB) protein is Small ribosomal subunit protein uS5.